The sequence spans 576 residues: Arginine--tRNA ligase (576 aa).

The short motif at 126 to 136 (ANPTGPMHIGH) is the 'HIGH' region element.

This sequence belongs to the class-I aminoacyl-tRNA synthetase family. In terms of assembly, monomer.

The protein resides in the cytoplasm. It catalyses the reaction tRNA(Arg) + L-arginine + ATP = L-arginyl-tRNA(Arg) + AMP + diphosphate. In Rickettsia peacockii (strain Rustic), this protein is Arginine--tRNA ligase.